The primary structure comprises 438 residues: Gamma-glutamyl phosphate reductase (438 aa).

Belongs to the gamma-glutamyl phosphate reductase family.

It localises to the cytoplasm. It catalyses the reaction L-glutamate 5-semialdehyde + phosphate + NADP(+) = L-glutamyl 5-phosphate + NADPH + H(+). The protein operates within amino-acid biosynthesis; L-proline biosynthesis; L-glutamate 5-semialdehyde from L-glutamate: step 2/2. Catalyzes the NADPH-dependent reduction of L-glutamate 5-phosphate into L-glutamate 5-semialdehyde and phosphate. The product spontaneously undergoes cyclization to form 1-pyrroline-5-carboxylate. This Prochlorococcus marinus (strain MIT 9303) protein is Gamma-glutamyl phosphate reductase.